The primary structure comprises 227 residues: Probable methylthioribulose-1-phosphate dehydratase (227 aa).

Residue Cys-87 coordinates substrate. 2 residues coordinate Zn(2+): His-105 and His-107. Glu-129 serves as the catalytic Proton donor/acceptor. Residue His-185 coordinates Zn(2+).

It belongs to the aldolase class II family. MtnB subfamily. It depends on Zn(2+) as a cofactor.

It is found in the cytoplasm. The catalysed reaction is 5-(methylsulfanyl)-D-ribulose 1-phosphate = 5-methylsulfanyl-2,3-dioxopentyl phosphate + H2O. It functions in the pathway amino-acid biosynthesis; L-methionine biosynthesis via salvage pathway; L-methionine from S-methyl-5-thio-alpha-D-ribose 1-phosphate: step 2/6. Functionally, catalyzes the dehydration of methylthioribulose-1-phosphate (MTRu-1-P) into 2,3-diketo-5-methylthiopentyl-1-phosphate (DK-MTP-1-P). The protein is Probable methylthioribulose-1-phosphate dehydratase of Drosophila melanogaster (Fruit fly).